The primary structure comprises 876 residues: Probable inactive ATP-dependent zinc metalloprotease FTSHI 2, chloroplastic (876 aa).

Residues Met-1–Asn-20 are disordered. Residues Met-1 to Ser-32 constitute a chloroplast transit peptide. Over residues His-8–Glu-19 the composition is skewed to polar residues. A helical membrane pass occupies residues Leu-59–Ala-79. Positions Thr-256–Lys-276 are disordered. Residues Lys-258–Lys-275 show a composition bias toward basic residues. The helical transmembrane segment at Val-304–Tyr-324 threads the bilayer. The disordered stretch occupies residues Glu-350 to Gly-370. The segment covering Gly-357 to Gly-368 has biased composition (acidic residues). Gly-450–Thr-457 lines the ATP pocket.

The protein in the N-terminal section; belongs to the AAA ATPase family. In the C-terminal section; belongs to the peptidase M41 family. Homooligomer. Interacts with FtsHi4.

The protein resides in the plastid. Its subcellular location is the chloroplast membrane. Required for plastid development during embryogenesis. Might be involved in chaperone functions or play a structural role in the thylakoid FtsH complex. The chain is Probable inactive ATP-dependent zinc metalloprotease FTSHI 2, chloroplastic from Arabidopsis thaliana (Mouse-ear cress).